The following is a 221-amino-acid chain: UPF0758 protein YicR (221 aa).

Residues 99–221 (ALLSPEMTRE…YVSFAERGWI (123 aa)) form the MPN domain. Zn(2+)-binding residues include His-170, His-172, and Asp-183. Positions 170–183 (HNHPSGCAEPSKAD) match the JAMM motif motif.

The protein belongs to the UPF0758 family. YicR subfamily.

The chain is UPF0758 protein YicR from Salmonella newport (strain SL254).